We begin with the raw amino-acid sequence, 174 residues long: Crossover junction endodeoxyribonuclease RuvC (174 aa).

Catalysis depends on residues aspartate 8, glutamate 68, and aspartate 140. Residues aspartate 8, glutamate 68, and aspartate 140 each coordinate Mg(2+).

This sequence belongs to the RuvC family. As to quaternary structure, homodimer which binds Holliday junction (HJ) DNA. The HJ becomes 2-fold symmetrical on binding to RuvC with unstacked arms; it has a different conformation from HJ DNA in complex with RuvA. In the full resolvosome a probable DNA-RuvA(4)-RuvB(12)-RuvC(2) complex forms which resolves the HJ. The cofactor is Mg(2+).

It localises to the cytoplasm. The catalysed reaction is Endonucleolytic cleavage at a junction such as a reciprocal single-stranded crossover between two homologous DNA duplexes (Holliday junction).. The RuvA-RuvB-RuvC complex processes Holliday junction (HJ) DNA during genetic recombination and DNA repair. Endonuclease that resolves HJ intermediates. Cleaves cruciform DNA by making single-stranded nicks across the HJ at symmetrical positions within the homologous arms, yielding a 5'-phosphate and a 3'-hydroxyl group; requires a central core of homology in the junction. The consensus cleavage sequence is 5'-(A/T)TT(C/G)-3'. Cleavage occurs on the 3'-side of the TT dinucleotide at the point of strand exchange. HJ branch migration catalyzed by RuvA-RuvB allows RuvC to scan DNA until it finds its consensus sequence, where it cleaves and resolves the cruciform DNA. This Legionella pneumophila (strain Lens) protein is Crossover junction endodeoxyribonuclease RuvC.